A 116-amino-acid chain; its full sequence is Large ribosomal subunit protein bL21c (116 aa).

This sequence belongs to the bacterial ribosomal protein bL21 family. Part of the 50S ribosomal subunit.

It localises to the plastid. Its subcellular location is the chloroplast. Functionally, this protein binds to 23S rRNA. This is Large ribosomal subunit protein bL21c from Emiliania huxleyi (Coccolithophore).